The chain runs to 87 residues: UPF0512 protein B (87 aa).

This sequence belongs to the UPF0512 family.

This chain is UPF0512 protein B, found in Dictyostelium discoideum (Social amoeba).